The sequence spans 373 residues: MTDNSNIRVVVGMSGGVDSSVTALLLKEQGYDVIGVFMKNWDDTDEFGVCTATEDYKDVAAVADQIGIPYYSVNFEKEYWDRVFEYFLAEYRAGRTPNPDVMCNKEIKFKAFLDYAMTLGADYVATGHYAQVTRDENGIVHMLRGADNNKDQTYFLSQLSQEQLQKTLFPLGHLQKPEVRRIAEEAGLATAKKKDSTGICFIGEKNFKDFLGQYLPAQPGRMMTVDGRDMGEHAGLMYYTIGQRGGLGIGGQHGGDNKPWFVVGKDLSKNILYVGQGFYHDSLMSTSLTASEIHFTRDMPNEFKLECTAKFRYRQPDSKVKVYVKGNQARVVFDDLQRAITPGQAVVFYNEQECLGGGMIDQAYRDDKICQYI.

ATP-binding positions include 12–19 (GMSGGVDS) and methionine 38. The segment at 98-100 (NPD) is interaction with target base in tRNA. Cysteine 103 (nucleophile) is an active-site residue. An intrachain disulfide couples cysteine 103 to cysteine 200. Glycine 127 provides a ligand contact to ATP. An interaction with tRNA region spans residues 150-152 (KDQ). The active-site Cysteine persulfide intermediate is cysteine 200. Residues 312 to 313 (RY) form an interaction with tRNA region.

Belongs to the MnmA/TRMU family.

Its subcellular location is the cytoplasm. It catalyses the reaction S-sulfanyl-L-cysteinyl-[protein] + uridine(34) in tRNA + AH2 + ATP = 2-thiouridine(34) in tRNA + L-cysteinyl-[protein] + A + AMP + diphosphate + H(+). Functionally, catalyzes the 2-thiolation of uridine at the wobble position (U34) of tRNA, leading to the formation of s(2)U34. In Streptococcus agalactiae serotype Ia (strain ATCC 27591 / A909 / CDC SS700), this protein is tRNA-specific 2-thiouridylase MnmA.